Consider the following 310-residue polypeptide: Porphobilinogen deaminase (310 aa).

Residue C242 is modified to S-(dipyrrolylmethanemethyl)cysteine.

The protein belongs to the HMBS family. Monomer. The cofactor is dipyrromethane.

The catalysed reaction is 4 porphobilinogen + H2O = hydroxymethylbilane + 4 NH4(+). Its pathway is porphyrin-containing compound metabolism; protoporphyrin-IX biosynthesis; coproporphyrinogen-III from 5-aminolevulinate: step 2/4. Tetrapolymerization of the monopyrrole PBG into the hydroxymethylbilane pre-uroporphyrinogen in several discrete steps. This is Porphobilinogen deaminase from Shewanella baltica (strain OS155 / ATCC BAA-1091).